Consider the following 653-residue polypeptide: DNA mismatch repair protein MutL (653 aa).

The segment at 375–425 (QNTPDYPRKAPRDNDRDESDNPQVRERAVSNPWVASPKTASTGKERYGSAS) is disordered. A compositionally biased stretch (basic and acidic residues) spans 380–389 (YPRKAPRDND).

The protein belongs to the DNA mismatch repair MutL/HexB family.

Its function is as follows. This protein is involved in the repair of mismatches in DNA. It is required for dam-dependent methyl-directed DNA mismatch repair. May act as a 'molecular matchmaker', a protein that promotes the formation of a stable complex between two or more DNA-binding proteins in an ATP-dependent manner without itself being part of a final effector complex. The chain is DNA mismatch repair protein MutL from Vibrio cholerae serotype O1 (strain ATCC 39541 / Classical Ogawa 395 / O395).